Reading from the N-terminus, the 183-residue chain is Ribulose bisphosphate carboxylase small subunit, chloroplastic (183 aa).

Residues 1–59 constitute a chloroplast transit peptide; that stretch reads MASSMISSGTVATVSADRPAPAQARMVAPFNGLKSSSAFPVTRKSNDITSIASNGGRVQ.

It belongs to the RuBisCO small chain family. As to quaternary structure, heterohexadecamer of 8 large and 8 small subunits.

Its subcellular location is the plastid. The protein localises to the chloroplast. In terms of biological role, ruBisCO catalyzes two reactions: the carboxylation of D-ribulose 1,5-bisphosphate, the primary event in carbon dioxide fixation, as well as the oxidative fragmentation of the pentose substrate. Both reactions occur simultaneously and in competition at the same active site. Although the small subunit is not catalytic it is essential for maximal activity. The protein is Ribulose bisphosphate carboxylase small subunit, chloroplastic of Pyrus pyrifolia (Chinese pear).